A 101-amino-acid polypeptide reads, in one-letter code: Phosphoribosyl-AMP cyclohydrolase (101 aa).

Asp71 contributes to the Mg(2+) binding site. Cys72 is a Zn(2+) binding site. Positions 73 and 75 each coordinate Mg(2+). Zn(2+) contacts are provided by Cys88 and Cys95.

The protein belongs to the PRA-CH family. As to quaternary structure, homodimer. Mg(2+) serves as cofactor. The cofactor is Zn(2+).

It is found in the cytoplasm. The catalysed reaction is 1-(5-phospho-beta-D-ribosyl)-5'-AMP + H2O = 1-(5-phospho-beta-D-ribosyl)-5-[(5-phospho-beta-D-ribosylamino)methylideneamino]imidazole-4-carboxamide. It participates in amino-acid biosynthesis; L-histidine biosynthesis; L-histidine from 5-phospho-alpha-D-ribose 1-diphosphate: step 3/9. Catalyzes the hydrolysis of the adenine ring of phosphoribosyl-AMP. This Bacillus cereus (strain AH820) protein is Phosphoribosyl-AMP cyclohydrolase.